Reading from the N-terminus, the 104-residue chain is Urease subunit gamma (104 aa).

It belongs to the urease gamma subunit family. In terms of assembly, heterotrimer of UreA (gamma), UreB (beta) and UreC (alpha) subunits. Three heterotrimers associate to form the active enzyme.

The protein localises to the cytoplasm. The enzyme catalyses urea + 2 H2O + H(+) = hydrogencarbonate + 2 NH4(+). The protein operates within nitrogen metabolism; urea degradation; CO(2) and NH(3) from urea (urease route): step 1/1. This is Urease subunit gamma from Actinomyces naeslundii.